A 154-amino-acid polypeptide reads, in one-letter code: MGLSDGEWQQVLNVWGKVEADIAGHGQEVLIRLFTGHPETLEKFDKFKHLKTEAEMKASEDLKKHGTVVLTALGGILKKKGHHEAELKPLAQSHATKHKIPIKYLEFISDAIIHVLHSKHPGDFGADAQGAMTKALELFRNDIAAKYKELGFQG.

The region spanning 2 to 148 (GLSDGEWQQV…FRNDIAAKYK (147 aa)) is the Globin domain. Ser-4 bears the Phosphoserine mark. His-65 contacts nitrite. His-65 serves as a coordination point for O2. Residue His-94 participates in heme b binding.

Belongs to the globin family. In terms of assembly, monomeric.

It localises to the cytoplasm. The protein localises to the sarcoplasm. It catalyses the reaction Fe(III)-heme b-[protein] + nitric oxide + H2O = Fe(II)-heme b-[protein] + nitrite + 2 H(+). The enzyme catalyses H2O2 + AH2 = A + 2 H2O. In terms of biological role, monomeric heme protein which primary function is to store oxygen and facilitate its diffusion within muscle tissues. Reversibly binds oxygen through a pentacoordinated heme iron and enables its timely and efficient release as needed during periods of heightened demand. Depending on the oxidative conditions of tissues and cells, and in addition to its ability to bind oxygen, it also has a nitrite reductase activity whereby it regulates the production of bioactive nitric oxide. Under stress conditions, like hypoxia and anoxia, it also protects cells against reactive oxygen species thanks to its pseudoperoxidase activity. The sequence is that of Myoglobin (MB) from Equus quagga burchellii (Burchell's zebra).